A 38-amino-acid polypeptide reads, in one-letter code: Mu/omega-theraphotoxin-Mb1a (38 aa).

3 disulfides stabilise this stretch: cysteine 7/cysteine 21, cysteine 14/cysteine 26, and cysteine 20/cysteine 33. Threonine 38 bears the Threonine amide mark.

This sequence belongs to the neurotoxin 10 (Hwtx-1) family. 28 (Jztx-11) subfamily. Expressed by the venom gland.

It is found in the secreted. In terms of biological role, paralytic toxin that inhibits insect voltage-gated sodium (Nav) and calcium (Cav) channels in P.americana (American cockroach) dorsal unpaired median (DUM) neurons, and inhibits the B.germanica (German cockroach) Nav channel (BgNaV1). Also shows a delay in fast inactivation when tested on BgNaV1. May act as a gating-modifier toxin on Nav and as a pore blocker on Cav. In vivo, reversibly paralyzes both L.cuprina (Australian sheep blowfly) and M.domestica (housefly), but does not affect larvae of H.armigera (cotton bollworms). This Monocentropus balfouri (Socotra Island blue baboon tarantula) protein is Mu/omega-theraphotoxin-Mb1a.